The sequence spans 292 residues: Homoserine kinase (292 aa).

ATP is bound at residue 84–94; that stretch reads PISRGLGSSSA.

Belongs to the GHMP kinase family. Homoserine kinase subfamily.

The protein localises to the cytoplasm. The enzyme catalyses L-homoserine + ATP = O-phospho-L-homoserine + ADP + H(+). The protein operates within amino-acid biosynthesis; L-threonine biosynthesis; L-threonine from L-aspartate: step 4/5. Its function is as follows. Catalyzes the ATP-dependent phosphorylation of L-homoserine to L-homoserine phosphate. This chain is Homoserine kinase, found in Sulfurovum sp. (strain NBC37-1).